The following is a 571-amino-acid chain: Sulfite reductase [NADPH] hemoprotein beta-component (571 aa).

[4Fe-4S] cluster contacts are provided by C435, C441, C480, and C484. Residue C484 coordinates siroheme.

It belongs to the nitrite and sulfite reductase 4Fe-4S domain family. Alpha(8)-beta(8). The alpha component is a flavoprotein, the beta component is a hemoprotein. Siroheme serves as cofactor. [4Fe-4S] cluster is required as a cofactor.

The catalysed reaction is hydrogen sulfide + 3 NADP(+) + 3 H2O = sulfite + 3 NADPH + 4 H(+). It participates in sulfur metabolism; hydrogen sulfide biosynthesis; hydrogen sulfide from sulfite (NADPH route): step 1/1. Component of the sulfite reductase complex that catalyzes the 6-electron reduction of sulfite to sulfide. This is one of several activities required for the biosynthesis of L-cysteine from sulfate. This chain is Sulfite reductase [NADPH] hemoprotein beta-component, found in Serratia proteamaculans (strain 568).